We begin with the raw amino-acid sequence, 67 residues long: Phycobilisome 7.8 kDa linker polypeptide, allophycocyanin-associated, core (67 aa).

Positions 1-56 (GRLFKITACVPSQTRIRTQRELQNTYFTKLVPYENWFREQQRIQKMGGKIVKVELA) constitute a CpcD-like domain.

Belongs to the phycobilisome linker protein family.

Its subcellular location is the cellular thylakoid membrane. Functionally, rod linker protein, associated with allophycocyanin. Linker polypeptides determine the state of aggregation and the location of the disk-shaped phycobiliprotein units within the phycobilisome and modulate their spectroscopic properties in order to mediate a directed and optimal energy transfer. The chain is Phycobilisome 7.8 kDa linker polypeptide, allophycocyanin-associated, core (apcC) from Mastigocladus laminosus (Fischerella sp.).